The chain runs to 398 residues: MKITNLPEVFTAALPVLKRINEAGYEAYFVGGSVRDLLLNRHIHDVDIATSAYPMEIKQIFKKTIDTGIKHGTVTVLYEGESYEITTFRTESGYQDFRRPDHVTFVQNLSEDLKRRDFTINALAMGVDGNVIDHFDGLGDLDKHLIRAVGKAENRFHEDALRMMRAVRFMSQLQFTLEPETERAISDNHELLSKISVERIRDEFVKMGIAPGSQKAFQIFLDTGLSEEVPGFKGKKDNLALYPQLNFSPTTEANLWALMIILLKLPNEKIPSFMRMWKNSNAMERQVADIVTFFDLVSSRAPSNYDLYQAGLETIASTIDLAHILGQPINGSALVDRYEALPIKNNHDLVIDGHFLLKNGVPAGPRVGLLLEEIKKAVLEGVISNNEAAITEFLSLNN.

Residues glycine 32 and arginine 35 each contribute to the ATP site. Residues glycine 32 and arginine 35 each contribute to the CTP site. Mg(2+) contacts are provided by aspartate 45 and aspartate 47. ATP-binding residues include arginine 116, aspartate 159, arginine 162, arginine 165, and arginine 168. Arginine 116, aspartate 159, arginine 162, arginine 165, and arginine 168 together coordinate CTP.

It belongs to the tRNA nucleotidyltransferase/poly(A) polymerase family. Bacterial CCA-adding enzyme type 3 subfamily. As to quaternary structure, homodimer. The cofactor is Mg(2+).

The catalysed reaction is a tRNA precursor + 2 CTP + ATP = a tRNA with a 3' CCA end + 3 diphosphate. It carries out the reaction a tRNA with a 3' CCA end + 2 CTP + ATP = a tRNA with a 3' CCACCA end + 3 diphosphate. Its function is as follows. Catalyzes the addition and repair of the essential 3'-terminal CCA sequence in tRNAs without using a nucleic acid template. Adds these three nucleotides in the order of C, C, and A to the tRNA nucleotide-73, using CTP and ATP as substrates and producing inorganic pyrophosphate. tRNA 3'-terminal CCA addition is required both for tRNA processing and repair. Also involved in tRNA surveillance by mediating tandem CCA addition to generate a CCACCA at the 3' terminus of unstable tRNAs. While stable tRNAs receive only 3'-terminal CCA, unstable tRNAs are marked with CCACCA and rapidly degraded. In Lactobacillus gasseri (strain ATCC 33323 / DSM 20243 / BCRC 14619 / CIP 102991 / JCM 1131 / KCTC 3163 / NCIMB 11718 / NCTC 13722 / AM63), this protein is CCA-adding enzyme.